The following is a 592-amino-acid chain: E3 ubiquitin-protein ligase RNF180 (592 aa).

At 1-564 (MKRSKELITK…DSRGWWFDMD (564 aa)) the chain is on the cytoplasmic side. S230 bears the Phosphoserine mark. The segment at 432–474 (CAVCLDVYFNPYMCYPCRHIFCEPCLRTLAKDNPSSTPCPLCR) adopts an RING-type zinc-finger fold. Residues 565 to 585 (MVIIYIYSVNWVIGFIVFCFL) form a helical membrane-spanning segment. The Extracellular segment spans residues 586 to 592 (CYFFFPF).

As to quaternary structure, interacts with ZIC2.

It is found in the endoplasmic reticulum membrane. The protein resides in the nucleus envelope. The enzyme catalyses S-ubiquitinyl-[E2 ubiquitin-conjugating enzyme]-L-cysteine + [acceptor protein]-L-lysine = [E2 ubiquitin-conjugating enzyme]-L-cysteine + N(6)-ubiquitinyl-[acceptor protein]-L-lysine.. It functions in the pathway protein modification; protein ubiquitination. Functionally, E3 ubiquitin-protein ligase which promotes polyubiquitination and degradation by the proteasome pathway of ZIC2. This chain is E3 ubiquitin-protein ligase RNF180 (RNF180), found in Pongo abelii (Sumatran orangutan).